A 147-amino-acid polypeptide reads, in one-letter code: METLTAISRWLAKQHVVTWCVQQEGELWCANAFYLFDAQKVAFYILTEEKTRHAQMSGPQAAVAGTVNGQPKTVALIRGVQFKGEIRRLEGEESDLARKAYNRRFPVARMLSAPVWEIRLDEIKFTDNTLGFGKKMIWLRDSGTEQA.

This sequence belongs to the UPF0306 family.

The chain is UPF0306 protein YhbP from Escherichia coli O8 (strain IAI1).